We begin with the raw amino-acid sequence, 416 residues long: GTPase ERA1, chloroplastic (416 aa).

The transit peptide at 1-53 (MELGLALRLVAPPPLLPCLSRRALSLPPDFVSSRVLRGRRIHASRLKHGAGVV) directs the protein to the chloroplast. The 171-residue stretch at 117–287 (RSGYVAVLGK…KEWILSKLPL (171 aa)) folds into the Era-type G domain. Residues 125–132 (GKPNVGKS) are G1. 125 to 132 (GKPNVGKS) provides a ligand contact to GTP. The segment at 151 to 155 (QTTRH) is G2. Positions 172-175 (DTPG) are G3. GTP is bound by residues 172 to 176 (DTPGV) and 237 to 240 (NKKD). Residues 237–240 (NKKD) form a G4 region. The segment at 266–268 (ISA) is G5. The KH type-2 domain maps to 318-395 (YRQEIPYSCQ…YLEVEVKVKE (78 aa)).

Belongs to the TRAFAC class TrmE-Era-EngA-EngB-Septin-like GTPase superfamily. Era GTPase family.

The protein localises to the plastid. It localises to the chloroplast stroma. The protein resides in the chloroplast nucleoid. Functionally, nuclear genome-encoded probable GTPase involved in ribosome biogenesis in chloroplasts. Plays a role in 16S rRNA maturation in plastids and may contribute to the assembly of the small (30S) ribosomal subunit. This Zea mays (Maize) protein is GTPase ERA1, chloroplastic.